The sequence spans 61 residues: L-amino-acid oxidase (61 aa).

Met43–Ala44 serves as a coordination point for FAD.

This sequence belongs to the flavin monoamine oxidase family. FIG1 subfamily. In terms of assembly, homodimer; non-covalently linked. It depends on FAD as a cofactor. Post-translationally, N-glycosylated. As to expression, expressed by the venom gland.

The protein localises to the secreted. It carries out the reaction an L-alpha-amino acid + O2 + H2O = a 2-oxocarboxylate + H2O2 + NH4(+). The enzyme catalyses L-leucine + O2 + H2O = 4-methyl-2-oxopentanoate + H2O2 + NH4(+). Catalyzes an oxidative deamination of predominantly hydrophobic and aromatic L-amino acids, thus producing hydrogen peroxide that may contribute to the diverse toxic effects of this enzyme. Shows activity on L-Leu. Exhibits diverse biological activities, such as apoptosis, antibacterial activities against both Gram-negative and Gram-positive bacteria and antiparasitic activities, as well as induction of platelet aggregation. Effects of snake L-amino oxidases on platelets are controversial, since they either induce aggregation or inhibit agonist-induced aggregation. These different effects are probably due to different experimental conditions. This protein may also induce hemorrhage, hemolysis, and edema. The sequence is that of L-amino-acid oxidase from Crotalus durissus cascavella (Northeastern Brazilian rattlesnake).